Here is a 341-residue protein sequence, read N- to C-terminus: Methionine import ATP-binding protein MetN 1 (341 aa).

The ABC transporter domain occupies 2–241; the sequence is IEFRQVSKSF…PKTTIAQNFV (240 aa). 38 to 45 is a binding site for ATP; it reads GYSGAGKS.

It belongs to the ABC transporter superfamily. Methionine importer (TC 3.A.1.24) family. As to quaternary structure, the complex is composed of two ATP-binding proteins (MetN), two transmembrane proteins (MetI) and a solute-binding protein (MetQ).

It is found in the cell membrane. The enzyme catalyses L-methionine(out) + ATP + H2O = L-methionine(in) + ADP + phosphate + H(+). The catalysed reaction is D-methionine(out) + ATP + H2O = D-methionine(in) + ADP + phosphate + H(+). Functionally, part of the ABC transporter complex MetNIQ involved in methionine import. Responsible for energy coupling to the transport system. The polypeptide is Methionine import ATP-binding protein MetN 1 (Staphylococcus aureus (strain bovine RF122 / ET3-1)).